Consider the following 526-residue polypeptide: MEYQTLWQRYLDWLYYHQNLGFYVDISRIRFDDAFIDSIKPKFEKAFKDMEELEKGAIANPDEGRMVGHYWLRAPELAPNDEVRKEITEPLKQIEEFVAKVLKGTIKPPTADKFTDIISVGIGGSALGPQFVSEALAGDFPPMGIHFIDNTDPAGIDRVVTRLKDRLKSTLVIVTSKSGGTPETRNGMLEMRHAYEKNGLDFPKYAVAVTMPGSKMDQVAHDWLARFPMQDWVGGRTSELSAVGLLPAALQGIDIQGMLAGAKEMDEATRVKDLKNNPSALLALSWYYAGNGKGEKDMVVLPYKDSLALLSRYLQQLVMESLGKEKDLDGNTVYQGIAVYGNKGSTDQHAYVQQLREGVPNFFVTFIEVLEDRQGSSIELEPGVTSGDYLAGFIQGTRQALYENHRDSITITIPEVNPRTVGALVALYERAVSFYGSLVNVNAYHQPGVEAGKKAAASILELQQNVMKALKEAGTELDLETLSQKAGHPDKVEAVYKIVRHLAANNRGVMLKGDLGKPTTLKVSFG.

The active-site Proton donor is the glutamate 320. Catalysis depends on residues histidine 349 and lysine 453.

Belongs to the GPI family.

Its subcellular location is the cytoplasm. It catalyses the reaction alpha-D-glucose 6-phosphate = beta-D-fructose 6-phosphate. It participates in carbohydrate biosynthesis; gluconeogenesis. Its pathway is carbohydrate degradation; glycolysis; D-glyceraldehyde 3-phosphate and glycerone phosphate from D-glucose: step 2/4. Catalyzes the reversible isomerization of glucose-6-phosphate to fructose-6-phosphate. This is Glucose-6-phosphate isomerase from Gloeothece citriformis (strain PCC 7424) (Cyanothece sp. (strain PCC 7424)).